A 59-amino-acid chain; its full sequence is Toxin TxpA (59 aa).

A helical transmembrane segment spans residues 7 to 27; the sequence is LMVMIGFANLIGGIMTWVISL.

The protein resides in the cell membrane. Functionally, toxic component of a type I toxin-antitoxin (TA) system. Overexpression of txpA causes cell lysis; the TxpA protein has been suggested to act on the cell membrane or might possibly block cell wall synthesis. Overexpression in E.coli is not toxic. In Bacillus subtilis (strain 168), this protein is Toxin TxpA.